The primary structure comprises 123 residues: Holo-[acyl-carrier-protein] synthase (123 aa).

Asp8 and Glu50 together coordinate Mg(2+).

It belongs to the P-Pant transferase superfamily. AcpS family. It depends on Mg(2+) as a cofactor.

Its subcellular location is the cytoplasm. It catalyses the reaction apo-[ACP] + CoA = holo-[ACP] + adenosine 3',5'-bisphosphate + H(+). In terms of biological role, transfers the 4'-phosphopantetheine moiety from coenzyme A to a Ser of acyl-carrier-protein. The polypeptide is Holo-[acyl-carrier-protein] synthase (Kocuria rhizophila (strain ATCC 9341 / DSM 348 / NBRC 103217 / DC2201)).